We begin with the raw amino-acid sequence, 752 residues long: MSSRTALAPGNDRNSDTHGTLGSGRSSDKGPSWSSRSLGARCRNSIASCPEEQPHVGNYRLLRTIGKGNFAKVKLARHILTGREVAIKIIDKTQLNPSSLQKLFREVRIMKGLNHPNIVKLFEVIETEKTLYLVMEYASAGEVFDYLVSHGRMKEKEARAKFRQIVSAVHYCHQKNIVHRDLKAENLLLDAEANIKIADFGFSNEFTLGSKLDTFCGSPPYAAPELFQGKKYDGPEVDIWSLGVILYTLVSGSLPFDGHNLKELRERVLRGKYRVPFYMSTDCESILRRFLVLNPAKRCTLEQIMKDKWINIGYEGEELKPYTEPEEDFGDTKRIEVMVGMGYTREEIKEALTNQKYNEVTATYLLLGRKTEEGGDRGAPGLALARVRAPSDTTNGTSSSKGSSHNKGQRASSSTYHRQRRHSDFCGPSPAPLHPKRSPTSTGDTELKEERMPGRKASCSAVGSGSRGLPPSSPMVSSAHNPNKAEIPERRKDSTSTPNNLPPSMMTRRNTYVCTERPGSERPSLLPNGKENSSGTSRVPPASPSSHSLAPPSGERSRLARGSTIRSTFHGGQVRDRRAGSGSGGGVQNGPPASPTLAHEAAPLPSGRPRPTTNLFTKLTSKLTRRVTDEPERIGGPEVTSCHLPWDKTETAPRLLRFPWSVKLTSSRPPEALMAALRQATAAARCRCRQPQPFLLACLHGGAGGPEPLSHFEVEVCQLPRPGLRGVLFRRVAGTALAFRTLVTRISNDLEL.

Residues 1-36 (MSSRTALAPGNDRNSDTHGTLGSGRSSDKGPSWSSR) form a disordered region. The region spanning 59-310 (YRLLRTIGKG…LEQIMKDKWI (252 aa)) is the Protein kinase domain. Residues 65-73 (IGKGNFAKV) and lysine 88 each bind ATP. The active-site Proton acceptor is the aspartate 181. Position 214 is a phosphothreonine; by LKB1 (threonine 214). The region spanning 324 to 368 (EPEEDFGDTKRIEVMVGMGYTREEIKEALTNQKYNEVTATYLLLG) is the UBA domain. Positions 385 to 615 (ARVRAPSDTT…SGRPRPTTNL (231 aa)) are disordered. The span at 391–406 (SDTTNGTSSSKGSSHN) shows a compositional bias: low complexity. 2 positions are modified to phosphoserine: serine 423 and serine 543. A compositionally biased stretch (low complexity) spans 544-553 (PSSHSLAPPS). One can recognise a KA1 domain in the interval 703-752 (AGGPEPLSHFEVEVCQLPRPGLRGVLFRRVAGTALAFRTLVTRISNDLEL).

It belongs to the protein kinase superfamily. CAMK Ser/Thr protein kinase family. SNF1 subfamily. As to quaternary structure, interacts with MAPT/TAU. Interacts with gamma-tubulin. Interacts with ODF2. Interacts with USP9X. Interacts with YWHAQ. Interacts with NLRP3; promoting NLRP3 recruitment to microtubule organizing center (MTOC). Mg(2+) is required as a cofactor. Ubiquitinated with 'Lys-29'- and 'Lys-33'-linked polyubiquitins which appear to impede LKB1-mediated phosphorylation. Deubiquitinated by USP9X. Post-translationally, phosphorylated at Thr-214 by STK11/LKB1 in complex with STE20-related adapter-alpha (STRADA) pseudo kinase and CAB39. Phosphorylated throughout the cell cycle. As to expression, isoform 1 and isoform 2 show similar expression patterns in the central nervous system and are present in the same subsets of neurons including pyramidal and non-pyramidal neurons in the cerebral cortex and hippocampus, cerebellar Purkinje cells, and interneurons and motor neurons in the spinal cord but not in glial cells (at protein level). Isoform 2 is the major isoform in brain and cerebellum. Also expressed in spleen, liver, small intestine, colon, kidney, tongue, testis and lung. Isoform 1 and isoform 2 are expressed at similar levels in heart.

It localises to the cytoplasm. Its subcellular location is the cytoskeleton. It is found in the microtubule organizing center. The protein localises to the centrosome. The protein resides in the cilium axoneme. It localises to the cilium basal body. Its subcellular location is the cell projection. It is found in the dendrite. The enzyme catalyses L-seryl-[protein] + ATP = O-phospho-L-seryl-[protein] + ADP + H(+). It catalyses the reaction L-threonyl-[protein] + ATP = O-phospho-L-threonyl-[protein] + ADP + H(+). Activated by phosphorylation on Thr-214. In terms of biological role, serine/threonine-protein kinase. Phosphorylates the microtubule-associated protein MAPT/TAU. Also phosphorylates the microtubule-associated proteins MAP2 and MAP4. Involved in regulation of the microtubule network, causing reorganization of microtubules into bundles. Required for the initiation of axoneme extension during cilium assembly. Regulates the centrosomal location of ODF2 and phosphorylates ODF2 in vitro. Plays a role in cell cycle progression, specifically in the G1/S checkpoint. Reduces neuronal cell survival. Plays a role in energy homeostasis by regulating satiety and metabolic rate. Promotes adipogenesis by activating JNK1 and inhibiting the p38MAPK pathway, and triggers apoptosis by activating the JNK1 pathway. Phosphorylates mTORC1 complex member RPTOR and acts as a negative regulator of the mTORC1 complex, probably due to disruption of the interaction between phosphorylated RPTOR and the RRAGA/RRAGC heterodimer which is required for mTORC1 activation. Involved in NLRP3 positioning along microtubules by mediating NLRP3 recruitment to microtubule organizing center (MTOC) upon inflammasome activation. This chain is MAP/microtubule affinity-regulating kinase 4, found in Mus musculus (Mouse).